The following is a 534-amino-acid chain: Kelch repeat and BTB domain-containing protein 4 (534 aa).

Residues 1–25 (MKGGNADSWQREKLASMESPEEPGA) form a disordered region. One can recognise a BTB domain in the interval 61-128 (ADVTISVEGR…IYHGTVKLRA (68 aa)). A BACK domain is found at 163 to 255 (CLQVMWLADR…SLKEIGENVH (93 aa)). Kelch repeat units lie at residues 255 to 301 (HIYL…KHGG), 302 to 344 (DLYV…SVPG), 347 to 394 (AIYS…NLNG), 396 to 446 (IYLL…VHKD), and 448 to 497 (VFIV…VFRD).

As to quaternary structure, component of the BCR(KBTBD4) E3 ubiquitin ligase complex, at least composed of CUL3, KBTBD4 and RBX1.

Functionally, substrate-specific adapter of a BCR (BTB-CUL3-RBX1) E3 ubiquitin ligase complex which targets CoREST corepressor complex components RCOR1, KDM1A/LSD1 and HDAC2 for proteasomal degradation. RCOR1 is likely to be the primary target while degradation of KDM1A and HDAC2 is likely due to their association with RCOR1. Also targets RCOR3, MIER2 and MIER3 for proteasomal degradation as well as associated proteins ZNF217 and RREB1. Degradation is dependent on the presence of an ELM2 domain in the target proteins. This Homo sapiens (Human) protein is Kelch repeat and BTB domain-containing protein 4 (KBTBD4).